A 128-amino-acid polypeptide reads, in one-letter code: Calcitonin gene-related peptide 1 (128 aa).

Positions 1 to 25 (MGFQKFSPFLALSILVLLQAGSLHA) are cleaved as a signal peptide. Positions 26–80 (APFRSALESSPADPATLSEDEARLLLAALVQDYVQMKASELEQEQEREGSRIIAQ) are excised as a propeptide. A disulfide bond links Cys84 and Cys89. Phe119 is modified (phenylalanine amide). Residues 125-128 (DLQA) constitute a propeptide that is removed on maturation.

It belongs to the calcitonin family. In terms of tissue distribution, expressed in spinal cord.

It localises to the secreted. Functionally, CGRP1/CALCA is a peptide hormone that induces vasodilation mediated by the CALCRL-RAMP1 receptor complex. Dilates a variety of vessels including the coronary, cerebral and systemic vasculature. Its abundance in the CNS also points toward a neurotransmitter or neuromodulator role. It also elevates platelet cAMP. CGRP1 can also bind and activate CALCR-RAMP1 (AMYR1) receptor complex. This Homo sapiens (Human) protein is Calcitonin gene-related peptide 1.